A 272-amino-acid chain; its full sequence is Cytochrome c oxidase subunit 3 (272 aa).

7 helical membrane-spanning segments follow: residues Pro-20 to Met-40, Gly-45 to Trp-65, Gly-89 to Phe-109, Val-128 to Gly-148, Ala-166 to Phe-186, Phe-204 to Ile-224, and Tyr-248 to Phe-268.

The protein belongs to the cytochrome c oxidase subunit 3 family. As to quaternary structure, component of the cytochrome c oxidase (complex IV, CIV), a multisubunit enzyme composed of a catalytic core of 3 subunits and several supernumerary subunits. The complex exists as a monomer or a dimer and forms supercomplexes (SCs) in the inner mitochondrial membrane with ubiquinol-cytochrome c oxidoreductase (cytochrome b-c1 complex, complex III, CIII).

It is found in the mitochondrion inner membrane. The catalysed reaction is 4 Fe(II)-[cytochrome c] + O2 + 8 H(+)(in) = 4 Fe(III)-[cytochrome c] + 2 H2O + 4 H(+)(out). Functionally, component of the cytochrome c oxidase, the last enzyme in the mitochondrial electron transport chain which drives oxidative phosphorylation. The respiratory chain contains 3 multisubunit complexes succinate dehydrogenase (complex II, CII), ubiquinol-cytochrome c oxidoreductase (cytochrome b-c1 complex, complex III, CIII) and cytochrome c oxidase (complex IV, CIV), that cooperate to transfer electrons derived from NADH and succinate to molecular oxygen, creating an electrochemical gradient over the inner membrane that drives transmembrane transport and the ATP synthase. Cytochrome c oxidase is the component of the respiratory chain that catalyzes the reduction of oxygen to water. Electrons originating from reduced cytochrome c in the intermembrane space (IMS) are transferred via the dinuclear copper A center (CU(A)) of subunit 2 and heme A of subunit 1 to the active site in subunit 1, a binuclear center (BNC) formed by heme A3 and copper B (CU(B)). The BNC reduces molecular oxygen to 2 water molecules using 4 electrons from cytochrome c in the IMS and 4 protons from the mitochondrial matrix. The chain is Cytochrome c oxidase subunit 3 (COX3) from Pylaiella littoralis (Seaweed).